The following is a 156-amino-acid chain: Small ribosomal subunit protein uS7 (156 aa).

This sequence belongs to the universal ribosomal protein uS7 family. As to quaternary structure, part of the 30S ribosomal subunit. Contacts proteins S9 and S11.

Functionally, one of the primary rRNA binding proteins, it binds directly to 16S rRNA where it nucleates assembly of the head domain of the 30S subunit. Is located at the subunit interface close to the decoding center, probably blocks exit of the E-site tRNA. The protein is Small ribosomal subunit protein uS7 of Deinococcus geothermalis (strain DSM 11300 / CIP 105573 / AG-3a).